Consider the following 3147-residue polypeptide: Probable polyketide synthase 1 (3147 aa).

The 446-residue stretch at 12–457 (SSDVAVIGVG…GSNCHLIIQE (446 aa)) folds into the Ketosynthase family 3 (KS3) domain. Residues cysteine 180 and histidine 319 each act as for beta-ketoacyl synthase activity in the active site. Residues 345-369 (QLNNFSTDGNDNDDDDDDNTSPEPL) are disordered. A compositionally biased stretch (acidic residues) spans 354 to 364 (NDNDDDDDDNT). Histidine 380 acts as the For beta-ketoacyl synthase activity in catalysis. The tract at residues 672–705 (GIYPSISVGHSFGEVSSYYLSGIISLETACKIVY) is acyl/malonyl transferase. Serine 682 functions as the For acyl/malonyl transferase activity in the catalytic mechanism. The N-terminal hotdog fold stretch occupies residues 976-1127 (NRLEGPTTSL…ATISLEQQQP (152 aa)). The region spanning 976 to 1298 (NRLEGPTTSL…IKSTNPKSTK (323 aa)) is the PKS/mFAS DH domain. The active-site Proton acceptor; for dehydratase activity is histidine 1014. A C-terminal hotdog fold region spans residues 1149–1298 (DISKLDKFEL…IKSTNPKSTK (150 aa)). Catalysis depends on aspartate 1209, which acts as the Proton donor; for dehydratase activity. The Carrier domain occupies 2568-2645 (SSNISLQDKI…SFLEKVNGLS (78 aa)). Residue serine 2605 is modified to O-(pantetheine 4'-phosphoryl)serine. Residues 2723–2747 (PSLSQSDVLKTPPIKSLNNTKNSSL) form a disordered region. Over residues 2738-2747 (SLNNTKNSSL) the composition is skewed to polar residues. The interval 2789–3147 (VLGIGISVPG…FEGCFLKNVV (359 aa)) is chalcone synthase. Cysteine 2930 is a catalytic residue.

This sequence in the C-terminal section; belongs to the thiolase-like superfamily. Chalcone/stilbene synthases family. As to quaternary structure, homodimer. Pantetheine 4'-phosphate is required as a cofactor.

The catalysed reaction is (E)-4-coumaroyl-CoA + 3 malonyl-CoA + 3 H(+) = 2',4,4',6'-tetrahydroxychalcone + 3 CO2 + 4 CoA. The protein operates within secondary metabolite biosynthesis; flavonoid biosynthesis. In terms of biological role, probable polyketide synthase. Produces only acylpyrones; in vitro. This Dictyostelium discoideum (Social amoeba) protein is Probable polyketide synthase 1 (stlA).